Here is a 199-residue protein sequence, read N- to C-terminus: Probable nicotinate-nucleotide adenylyltransferase (199 aa).

It belongs to the NadD family.

It carries out the reaction nicotinate beta-D-ribonucleotide + ATP + H(+) = deamido-NAD(+) + diphosphate. The protein operates within cofactor biosynthesis; NAD(+) biosynthesis; deamido-NAD(+) from nicotinate D-ribonucleotide: step 1/1. In terms of biological role, catalyzes the reversible adenylation of nicotinate mononucleotide (NaMN) to nicotinic acid adenine dinucleotide (NaAD). The sequence is that of Probable nicotinate-nucleotide adenylyltransferase from Corynebacterium jeikeium (strain K411).